The primary structure comprises 123 residues: Histone H2B (123 aa).

The segment at 1–30 is disordered; sequence MPPKTSGKAAKKAGKAQKNITKTDKKKKRK. The residue at position 2 (P2) is an N-methylproline; partial. K44 bears the N6-succinyllysine mark. S110 carries O-linked (GlcNAc) serine glycosylation. N6-succinyllysine occurs at positions 114 and 118. K118 is covalently cross-linked (Glycyl lysine isopeptide (Lys-Gly) (interchain with G-Cter in ubiquitin)).

The protein belongs to the histone H2B family. In terms of assembly, the nucleosome is a histone octamer containing two molecules each of H2A, H2B, H3 and H4 assembled in one H3-H4 heterotetramer and two H2A-H2B heterodimers. The octamer wraps approximately 147 bp of DNA. Post-translationally, phosphorylated by the catalytic component of the Dbf4-dependent kinase (DDK) complex Cdc7. In terms of processing, monoubiquitination of Lys-118 by Bre1 gives a specific tag for epigenetic transcriptional activation and is also prerequisite for histone H3 'Lys-4' and 'Lys-79' methylation. Deubiquitination of Lys-118 by the SAGA complex is involved in activating transcription of a large subset of genes. Methylation at Pro-2 increases upon heat shock. Post-translationally, glcNAcylation at Ser-110 promotes monoubiquitination of Lys-118. It fluctuates in response to extracellular glucose, and associates with transcribed genes.

It is found in the nucleus. It localises to the chromosome. In terms of biological role, core component of nucleosome. Nucleosomes wrap and compact DNA into chromatin, limiting DNA accessibility to the cellular machineries which require DNA as a template. Histones thereby play a central role in transcription regulation, DNA repair, DNA replication and chromosomal stability. DNA accessibility is regulated via a complex set of post-translational modifications of histones, also called histone code, and nucleosome remodeling. The chain is Histone H2B (His2B) from Drosophila erecta (Fruit fly).